The following is a 131-amino-acid chain: Fumarate reductase subunit C (131 aa).

Helical transmembrane passes span 60 to 80 (FVGF…LAAA) and 110 to 130 (IKGL…VALF).

This sequence belongs to the FrdC family. As to quaternary structure, part of an enzyme complex containing four subunits: a flavoprotein (FrdA), an iron-sulfur protein (FrdB), and two hydrophobic anchor proteins (FrdC and FrdD).

Its subcellular location is the cell inner membrane. In terms of biological role, two distinct, membrane-bound, FAD-containing enzymes are responsible for the catalysis of fumarate and succinate interconversion; fumarate reductase is used in anaerobic growth, and succinate dehydrogenase is used in aerobic growth. Anchors the catalytic components of the fumarate reductase complex to the cell inner membrane, binds quinones. In Enterobacter sp. (strain 638), this protein is Fumarate reductase subunit C.